The primary structure comprises 156 residues: Small ribosomal subunit protein uS7 (156 aa).

The protein belongs to the universal ribosomal protein uS7 family. In terms of assembly, part of the 30S ribosomal subunit. Contacts proteins S9 and S11.

Functionally, one of the primary rRNA binding proteins, it binds directly to 16S rRNA where it nucleates assembly of the head domain of the 30S subunit. Is located at the subunit interface close to the decoding center, probably blocks exit of the E-site tRNA. This is Small ribosomal subunit protein uS7 from Buchnera aphidicola subsp. Baizongia pistaciae (strain Bp).